The primary structure comprises 413 residues: Gamma-glutamyl phosphate reductase (413 aa).

This sequence belongs to the gamma-glutamyl phosphate reductase family.

The protein localises to the cytoplasm. The enzyme catalyses L-glutamate 5-semialdehyde + phosphate + NADP(+) = L-glutamyl 5-phosphate + NADPH + H(+). Its pathway is amino-acid biosynthesis; L-proline biosynthesis; L-glutamate 5-semialdehyde from L-glutamate: step 2/2. Its function is as follows. Catalyzes the NADPH-dependent reduction of L-glutamate 5-phosphate into L-glutamate 5-semialdehyde and phosphate. The product spontaneously undergoes cyclization to form 1-pyrroline-5-carboxylate. This chain is Gamma-glutamyl phosphate reductase, found in Thermus thermophilus (strain ATCC BAA-163 / DSM 7039 / HB27).